The sequence spans 449 residues: Flavonol 7-O-beta-glucosyltransferase UGT74F1 (449 aa).

The Proton acceptor role is filled by His18. His18 is a binding site for an anthocyanidin. Residue Asp111 is the Charge relay of the active site. UDP-alpha-D-glucose contacts are provided by Thr133, Gln327, His342, Trp345, Asn346, Ser347, Glu350, Asp366, and Gln367.

It belongs to the UDP-glycosyltransferase family.

It catalyses the reaction a 7-O-hydroxy-flavonol + UDP-alpha-D-glucose = a flavonol 7-O-beta-D-glucoside + UDP + H(+). Possesses quercetin 7-O-glucosyltransferase and 4'-O-glucosyltransferase activities in vitro. Also active in vitro on benzoates and benzoate derivatives. Has low affinity for the tryptophan precursor anthranilate. Catalyzes the formation of anthranilate glucose ester. Is a minor source of this activity in the plant. The protein is Flavonol 7-O-beta-glucosyltransferase UGT74F1 of Arabidopsis thaliana (Mouse-ear cress).